Reading from the N-terminus, the 327-residue chain is Vacuolar protein sorting-associated protein 26A (327 aa).

Residues 306–327 form a disordered region; that stretch reads RTNFHQRFESPESQASAEQPEM. A Phosphoserine modification is found at Ser315. Over residues 316–327 the composition is skewed to polar residues; it reads PESQASAEQPEM.

It belongs to the VPS26 family. In terms of assembly, component of the heterotrimeric retromer cargo-selective complex (CSC), also described as vacuolar protein sorting subcomplex (VPS), formed by VPS26 (VPS26A or VPS26B), VPS29 and VPS35. The CSC has a highly elongated structure with VPS26 and VPS29 binding independently at opposite distal ends of VPS35 as central platform. The CSC is believed to associate with variable sorting nexins to form functionally distinct retromer complex variants. The originally described retromer complex (also called SNX-BAR retromer) is a pentamer containing the CSC and a heterodimeric membrane-deforming subcomplex formed between SNX1 or SNX2 and SNX5 or SNX6 (also called SNX-BAR subcomplex); the respective CSC and SNX-BAR subcomplexes associate with low affinity. The CSC associates with SNX3 to form a SNX3-retromer complex. The CSC associates with SNX27, the WASH complex and the SNX-BAR subcomplex to form the SNX27-retromer complex. Interacts with VPS29, VPS35, SNX1, SNX2, SNX5, SNX6, SNX3, SNX27, RAB7A, ECPAS, EHD1, WASHC5, SORL1.

Its subcellular location is the cytoplasm. It is found in the endosome membrane. The protein resides in the early endosome. Functionally, acts as a component of the retromer cargo-selective complex (CSC). The CSC is believed to be the core functional component of retromer or respective retromer complex variants acting to prevent missorting of selected transmembrane cargo proteins into the lysosomal degradation pathway. The recruitment of the CSC to the endosomal membrane involves RAB7A and SNX3. The SNX-BAR retromer mediates retrograde transport of cargo proteins from endosomes to the trans-Golgi network (TGN) and is involved in endosome-to-plasma membrane transport for cargo protein recycling. The SNX3-retromer mediates the retrograde endosome-to-TGN transport of WLS distinct from the SNX-BAR retromer pathway. The SNX27-retromer is believed to be involved in endosome-to-plasma membrane trafficking and recycling of a broad spectrum of cargo proteins. The CSC seems to act as recruitment hub for other proteins, such as the WASH complex and TBC1D5. Required for retrograde transport of lysosomal enzyme receptor IGF2R. Required to regulate transcytosis of the polymeric immunoglobulin receptor (pIgR-pIgA). Required for the endosomal localization of WASHC2A (indicative for the WASH complex). Required for the endosomal localization of TBC1D5. Mediates retromer cargo recognition of SORL1 and is involved in trafficking of SORL1 implicated in sorting and processing of APP. Involved in retromer-independent lysosomal sorting of F2R. Involved in recycling of ADRB2. Enhances the affinity of SNX27 for PDZ-binding motifs in cargo proteins. This Homo sapiens (Human) protein is Vacuolar protein sorting-associated protein 26A.